Here is a 125-residue protein sequence, read N- to C-terminus: Prepro-urotensin II-gamma (125 aa).

The N-terminal stretch at 1–21 (MMCNLLLSCSVLLLSCSHLLA) is a signal peptide. A propeptide spanning residues 109–111 (QFR) is cleaved from the precursor. Cys119 and Cys124 form a disulfide bridge.

This sequence belongs to the urotensin-2 family.

It is found in the secreted. Its function is as follows. Urotensin is found in the teleost caudal neurosecretory system. It has a suggested role in osmoregulation and as a corticotropin-releasing factor. The non-hormonal portion of this precursor may be a urotensin binding protein, urophysin. The chain is Prepro-urotensin II-gamma from Cyprinus carpio (Common carp).